A 1061-amino-acid polypeptide reads, in one-letter code: TonB-dependent transporter Oar (1061 aa).

Positions 1 to 26 (MHLNRVLRETGVVVAAGLLYGSAAFA) are cleaved as a signal peptide. The TBDR plug domain maps to 121-243 (EIVGAPPTID…TGGVINAVTR (123 aa)). The 814-residue stretch at 248 to 1061 (EFHGSVFANW…QVRFGIRYTF (814 aa)) folds into the TBDR beta-barrel domain. Residues 701–722 (RSLAEPGQGTATSCDPSSFESQ) are disordered. Over residues 709–722 (GTATSCDPSSFESQ) the composition is skewed to polar residues.

It belongs to the TonB-dependent receptor family. As to quaternary structure, interacts with TonB. Part of a transport system composed of the outer membrane transporter Oar, the trans-periplasmic binding protein TonB and the inner membrane proteins ExbB and ExbD.

Its subcellular location is the cell outer membrane. In terms of biological role, required for secretion of the protease PopC across the bacterial outer membrane. Binds and probably transports PopC from the periplasm to the extracellular milieu. It derives its energy for transport by interacting with the trans-periplasmic membrane protein TonB. Required for cellular adhesion during fruiting body formation, a multicellular developmental program that is induced in response to starvation. The polypeptide is TonB-dependent transporter Oar (Myxococcus xanthus).